The sequence spans 380 residues: Cytochrome b (380 aa).

4 helical membrane passes run 34-54 (FGSL…LLAM), 78-99 (WLIR…YLHI), 114-134 (WNTG…GYVL), and 179-199 (FFAL…IHLT). Heme b-binding residues include H84 and H98. Heme b is bound by residues H183 and H197. H202 contacts a ubiquinone. The next 4 helical transmembrane spans lie at 227–247 (SKDI…ALLS), 289–309 (LGGV…PFLH), 321–341 (LSQA…WIGS), and 348–368 (FIII…ILLP).

Belongs to the cytochrome b family. The cytochrome bc1 complex contains 11 subunits: 3 respiratory subunits (MT-CYB, CYC1 and UQCRFS1), 2 core proteins (UQCRC1 and UQCRC2) and 6 low-molecular weight proteins (UQCRH/QCR6, UQCRB/QCR7, UQCRQ/QCR8, UQCR10/QCR9, UQCR11/QCR10 and a cleavage product of UQCRFS1). This cytochrome bc1 complex then forms a dimer. Heme b serves as cofactor.

The protein localises to the mitochondrion inner membrane. Its function is as follows. Component of the ubiquinol-cytochrome c reductase complex (complex III or cytochrome b-c1 complex) that is part of the mitochondrial respiratory chain. The b-c1 complex mediates electron transfer from ubiquinol to cytochrome c. Contributes to the generation of a proton gradient across the mitochondrial membrane that is then used for ATP synthesis. This Phalcoboenus australis (Striated caracara) protein is Cytochrome b (MT-CYB).